The primary structure comprises 208 residues: FMN-dependent NADH:quinone oxidoreductase 3 (208 aa).

The protein belongs to the azoreductase type 1 family. As to quaternary structure, homodimer. Requires FMN as cofactor.

The enzyme catalyses 2 a quinone + NADH + H(+) = 2 a 1,4-benzosemiquinone + NAD(+). The catalysed reaction is N,N-dimethyl-1,4-phenylenediamine + anthranilate + 2 NAD(+) = 2-(4-dimethylaminophenyl)diazenylbenzoate + 2 NADH + 2 H(+). In terms of biological role, quinone reductase that provides resistance to thiol-specific stress caused by electrophilic quinones. Functionally, also exhibits azoreductase activity. Catalyzes the reductive cleavage of the azo bond in aromatic azo compounds to the corresponding amines. The chain is FMN-dependent NADH:quinone oxidoreductase 3 from Bacillus cereus (strain ATCC 14579 / DSM 31 / CCUG 7414 / JCM 2152 / NBRC 15305 / NCIMB 9373 / NCTC 2599 / NRRL B-3711).